The sequence spans 175 residues: Ribosome maturation factor RimP (175 aa).

The interval 152–175 (EFNRPTDGPGDDGDDGGDDEAGEA) is disordered. Residues 160–175 (PGDDGDDGGDDEAGEA) are compositionally biased toward acidic residues.

It belongs to the RimP family.

It localises to the cytoplasm. Functionally, required for maturation of 30S ribosomal subunits. The chain is Ribosome maturation factor RimP from Nocardioides sp. (strain ATCC BAA-499 / JS614).